The following is a 260-amino-acid chain: Ribosomal RNA small subunit methyltransferase A (260 aa).

S-adenosyl-L-methionine is bound by residues asparagine 16, leucine 18, glycine 43, glutamate 64, aspartate 86, and asparagine 108.

It belongs to the class I-like SAM-binding methyltransferase superfamily. rRNA adenine N(6)-methyltransferase family. RsmA subfamily.

The protein localises to the cytoplasm. The catalysed reaction is adenosine(1518)/adenosine(1519) in 16S rRNA + 4 S-adenosyl-L-methionine = N(6)-dimethyladenosine(1518)/N(6)-dimethyladenosine(1519) in 16S rRNA + 4 S-adenosyl-L-homocysteine + 4 H(+). Specifically dimethylates two adjacent adenosines (A1518 and A1519) in the loop of a conserved hairpin near the 3'-end of 16S rRNA in the 30S particle. May play a critical role in biogenesis of 30S subunits. The sequence is that of Ribosomal RNA small subunit methyltransferase A from Buchnera aphidicola subsp. Baizongia pistaciae (strain Bp).